The following is a 548-amino-acid chain: Probable delta-1-pyrroline-5-carboxylate dehydrogenase (548 aa).

The Proton acceptor role is filled by Glu298. Cys332 acts as the Nucleophile in catalysis. Phosphoserine is present on residues Ser391, Ser394, and Ser396.

This sequence belongs to the aldehyde dehydrogenase family.

It carries out the reaction L-glutamate 5-semialdehyde + NAD(+) + H2O = L-glutamate + NADH + 2 H(+). It functions in the pathway amino-acid degradation; L-proline degradation into L-glutamate; L-glutamate from L-proline: step 2/2. The protein is Probable delta-1-pyrroline-5-carboxylate dehydrogenase of Schizosaccharomyces pombe (strain 972 / ATCC 24843) (Fission yeast).